Reading from the N-terminus, the 473-residue chain is Exodeoxyribonuclease I (473 aa).

An Exonuclease domain is found at 9–188 (IYDYESFGVN…AMADVYATIA (180 aa)). Positions 11, 13, and 182 each coordinate Mg(2+). A substrate-binding site is contributed by glutamate 13. Residues 198 to 353 (PKLFQYFFEN…KVADIFNEER (156 aa)) enclose the ExoI SH3-like domain. The 117-residue stretch at 356-472 (ASNDNVETEL…QVYEYGIKLL (117 aa)) folds into the ExoI C-terminal domain.

In terms of assembly, monomer. Interacts with ssb (via C-terminus); this interaction stimulates the exonuclease activity by recruiting the enzyme to its substrate. Mg(2+) serves as cofactor.

It carries out the reaction Exonucleolytic cleavage in the 3'- to 5'-direction to yield nucleoside 5'-phosphates.. Functionally, degrades single-stranded DNA (ssDNA) in a highly processive manner. Also functions as a DNA deoxyribophosphodiesterase that releases deoxyribose-phosphate moieties following the cleavage of DNA at an apurinic/apyrimidinic (AP) site by either an AP endonuclease or AP lyase. Involved in genome maintenance but probably not in phase variation, which contributes to the virulence and disease. The chain is Exodeoxyribonuclease I (sbcB) from Haemophilus influenzae (strain ATCC 51907 / DSM 11121 / KW20 / Rd).